The sequence spans 1887 residues: MIFQSFLLGNLVSLCMKIINSVVVVGLYYGFLTTFSIGPSYLFLLRALVMEEGTEKKVSATTGFITGQLMMFISIYYAPLHLALGRPHTITVLALPYLLFHFFWNNHKHFFDYGSTTRNSMRNLSIQCVFLNNLIFQLFNHFILPSSMLARLVNIYLFRCNNKILFVTSGFVGWLIGHILFMKWLGLVLVWIRQNHSIRSNKYIRSNKYLVLELRNSMARIFSILLFITCVYYLGRIPSPILTKKLKEASKTEERVESEEERDVEIETASEMKGTKQEQEGSTEEDPYPSPSLFSEEGWDPDKIDETEEIRVNGKDKIKDKFHSHLTETGYNNINTSNSPIYDYQDSYLNNNNTGNLENLKLQLLDKKNENQDLFWFQKPLVSLLFDYNRWNRPFRYIKNNRFEQAVRTEMSQYFFDTCKSDGKQRISFTYPPSLSTFWKMIKRKIPLLSLQKTLPNELDTQWVSTNKEKSNNLNKEFLNRLEILAKESLSMDILETRTRLCNDDTKKEYVPKMYDPLLNGPYRGTIKKGVSSSIINNTLLENWEKRVRLNRIHTIFLPNMDYQEFEQKAYTIDKKPLSTEIDEFLTLINELGNEPKSSLNLKGLSLFSDQEQRRVNSEKRTKFVKFVFNAIDPNETKSGKKSIGIKEISKKVPRWSHKLITELDQQMGEFQDRASIDHQLRSRKAKRVVIFTDNNATNDPEEEVALISYSQQSDFRRGIIKGSMRAQRRKTFISKLFQANVHSPLFVDRITPLRLFSFDISELIKPIFRNWTGKEGEFKILESREEQTKREEKKEKDKKEDNKRKEQARIAIEEAWDNIPFAQIIRGYMLITQSILRKYILLPSLIIAKNLGRMLFLQLPEWSEDLQEWNREMQIKCTYNGVQLSETEFPKDWLRDGIQIKILFPFCLKPWHISKLYPSRGELMKKQKQKDDFCFLTVWGMEAELPFGSPRKRPSFFEPIFKELEKKIGKLKKKYFLTLKIFKGKTKLFRRVSKETKKWFIKSIGFLKKIKKELSKVNPIVLFRFKEISESNETKKEKDYLISNQIINESFSQIESGNWPNSSLIETKMKDLTDRTSTIKNQIERITKDKKKVTPEIDINPNKTNNIKKLESPKKFFQILQRRNTRVIWKFHYFLKLFIQRLYIDLFLSIINIPRITTQLFLESTNKLIEKFISNNEINQEKITNKKKIHFIFISTIKKSLYNISKKNSHIFCDLSYLSQAYVFYKLSQTQVINLSKFRSVLQYNTTSCFLKTKIKDYFKTLGIFHSELKHKKLQSYRINQWKNWLRWHYQYDLSQIRWSRLMPKKWRTKVNQSCMAKNKNRNLNKWNSYEKDQLIHYKKENDSELYSLSNQKDNFKKCYRYGLLAYKSINYENKSDSFFSRLPFQVKKNLEISYNSNTSKHNFVDMPGNLHINNYLRKVNILDIERNLDRKYFDWKIIHFSLRQKGDIEAWVKIDTNSNPNTKIGINNYQIIDKIEKKGVFYLTTHQNPEKTQKNSKKVFFDWMGMNEKIFNRPILNLEFWFFPEFVLLYNVYKIKPWIIPSKFLLFNLNTNENVIQNKNQKQNFFLPSNKKIKNRSQETKEPPSQRERGSDIENKGNLSPVFSKHQTDLEKDYVESDTKKGQNKKQYKSNTEAELDLFLKRYLLFQLRWNDALNKRMLENIKVYCLLLRLINPTKITISSIQRREMSLDIMLIQANLPLTDLMKKGVLIIEPIRLSVKHNGQFIMYQTIGISLVHKSKHQTNQRYREQRYVDKKNFDEFILQPQTQRINTEKTHFDLLVPENILWSRRRRELRIRSFFNSLNWNVVDRNSVFCNETNVKNWSQFLGERKPLYKDKKKLIKFKFFLWPNYRLEDLACMNRYWFDTNNGSRFSILRIHMYPRLKIN.

6 consecutive transmembrane segments (helical) span residues 18 to 38 (IINS…FSIG), 64 to 84 (FITG…HLAL), 87 to 107 (PHTI…WNNH), 124 to 144 (LSIQ…HFIL), 172 to 192 (VGWL…LVWI), and 221 to 241 (IFSI…PSPI). 3 disordered regions span residues 248–300 (EASK…EGWD), 785–805 (REEQ…DNKR), and 1569–1603 (LPSN…NLSP). Positions 256–268 (VESEEERDVEIET) are enriched in acidic residues. Over residues 1578–1597 (RSQETKEPPSQRERGSDIEN) the composition is skewed to basic and acidic residues.

Belongs to the TIC214 family. Part of the Tic complex.

Its subcellular location is the plastid. The protein resides in the chloroplast inner membrane. Functionally, involved in protein precursor import into chloroplasts. May be part of an intermediate translocation complex acting as a protein-conducting channel at the inner envelope. The polypeptide is Protein TIC 214 (Solanum tuberosum (Potato)).